A 263-amino-acid chain; its full sequence is Tryptophan synthase alpha chain (263 aa).

Catalysis depends on proton acceptor residues Glu50 and Asp61.

The protein belongs to the TrpA family. As to quaternary structure, tetramer of two alpha and two beta chains.

The enzyme catalyses (1S,2R)-1-C-(indol-3-yl)glycerol 3-phosphate + L-serine = D-glyceraldehyde 3-phosphate + L-tryptophan + H2O. It functions in the pathway amino-acid biosynthesis; L-tryptophan biosynthesis; L-tryptophan from chorismate: step 5/5. Its function is as follows. The alpha subunit is responsible for the aldol cleavage of indoleglycerol phosphate to indole and glyceraldehyde 3-phosphate. The sequence is that of Tryptophan synthase alpha chain from Clostridium acetobutylicum (strain ATCC 824 / DSM 792 / JCM 1419 / IAM 19013 / LMG 5710 / NBRC 13948 / NRRL B-527 / VKM B-1787 / 2291 / W).